Consider the following 438-residue polypeptide: Arginine deiminase-like protein (438 aa).

It belongs to the arginine deiminase family.

This is Arginine deiminase-like protein from Mycoplasma pneumoniae (strain ATCC 29342 / M129 / Subtype 1) (Mycoplasmoides pneumoniae).